We begin with the raw amino-acid sequence, 379 residues long: Anthranilate O-methyltransferase 3 (379 aa).

A compositionally biased stretch (basic and acidic residues) spans 1–10 (MPMRIERDLH). Residues 1–21 (MPMRIERDLHMATGNGETSYT) form a disordered region. Tyr20 contacts S-adenosyl-L-homocysteine. Gln27 provides a ligand contact to anthranilate. Residues Cys61, Asn66, Asp100, Leu101, Ser143, and Phe144 each coordinate S-adenosyl-L-homocysteine. Positions 164 and 165 each coordinate anthranilate. Glu265 and Phe267 together coordinate Mg(2+).

Belongs to the methyltransferase superfamily. Type-7 methyltransferase family. SABATH subfamily.

The enzyme catalyses anthranilate + S-adenosyl-L-methionine = O-methyl anthranilate + S-adenosyl-L-homocysteine. The catalysed reaction is benzoate + S-adenosyl-L-methionine = methyl benzoate + S-adenosyl-L-homocysteine. It catalyses the reaction salicylate + S-adenosyl-L-methionine = methyl salicylate + S-adenosyl-L-homocysteine. In terms of biological role, methyltransferase involved in the biosynthesis of methyl anthranilate in response to stresses. Utilizes anthranilic acid as substrate. Produces exclusively the O-methyl ester. Can also use benzoic acid as substrate. Low activity with salicylic acid. The polypeptide is Anthranilate O-methyltransferase 3 (AAMT3) (Zea mays (Maize)).